Reading from the N-terminus, the 520-residue chain is Transactivator/viroplasmin protein (520 aa).

The segment at 486–520 is disordered; that stretch reads VQDASADSGPKDGPPPTRSIVEKEDVPTTSSKQVD.

This sequence belongs to the caulimoviridae viroplasmin family.

The protein localises to the host cytoplasm. Its function is as follows. Enhances the ribosomal termination-reinitiation event leading to the translation of major open reading frames on the polycistronic viral RNAs. This chain is Transactivator/viroplasmin protein, found in Cauliflower mosaic virus (strain BBC) (CaMV).